Reading from the N-terminus, the 347-residue chain is Glutamyl-Q tRNA(Asp) synthetase (347 aa).

Residues 31–35 and glutamate 67 each bind L-glutamate; that span reads RFAPS. The 'HIGH' region motif lies at 34–44; sequence PSPTSALHLGN. Zn(2+) contacts are provided by cysteine 121, cysteine 123, tyrosine 143, and cysteine 147. L-glutamate-binding residues include tyrosine 203 and arginine 221. The 'KMSKS' region signature appears at 259 to 263; it reads RLSKS. Position 262 (lysine 262) interacts with ATP.

This sequence belongs to the class-I aminoacyl-tRNA synthetase family. GluQ subfamily. It depends on Zn(2+) as a cofactor.

In terms of biological role, catalyzes the tRNA-independent activation of glutamate in presence of ATP and the subsequent transfer of glutamate onto a tRNA(Asp). Glutamate is transferred on the 2-amino-5-(4,5-dihydroxy-2-cyclopenten-1-yl) moiety of the queuosine in the wobble position of the QUC anticodon. The chain is Glutamyl-Q tRNA(Asp) synthetase from Cutibacterium acnes (strain DSM 16379 / KPA171202) (Propionibacterium acnes).